Here is a 193-residue protein sequence, read N- to C-terminus: Orotate phosphoribosyltransferase (193 aa).

5-phospho-alpha-D-ribose 1-diphosphate is bound at residue 114 to 122 (EDVITTGGS). T118 and R146 together coordinate orotate.

This sequence belongs to the purine/pyrimidine phosphoribosyltransferase family. PyrE subfamily. As to quaternary structure, homodimer. The cofactor is Mg(2+).

The catalysed reaction is orotidine 5'-phosphate + diphosphate = orotate + 5-phospho-alpha-D-ribose 1-diphosphate. Its pathway is pyrimidine metabolism; UMP biosynthesis via de novo pathway; UMP from orotate: step 1/2. Its function is as follows. Catalyzes the transfer of a ribosyl phosphate group from 5-phosphoribose 1-diphosphate to orotate, leading to the formation of orotidine monophosphate (OMP). The sequence is that of Orotate phosphoribosyltransferase from Chlorobium phaeobacteroides (strain DSM 266 / SMG 266 / 2430).